The following is a 317-amino-acid chain: MADIQDEAGPFLPPTISPPALLSGVSQTYFSPIPPQLLADNTPCCLGVDEAGRGPVLGPMVYSAFYLPLTLSDPLLKQKHSFDDSKVLTPAVRLSLMKELCTKDTELHDNCGYATSSLSPLSISSGMLKASKAQIYNLNQQAMDATIALIKGIYERGVNVTDIFIDTIGQPAAYQKKLERVFPTAKITVAKKADSLYPVVSAASVVAKVTRDIALEVLWADRTMAWGSGYPSDSKCVSWLKQNMHPVFGWGPECRFSWGTAKDMLETKGGVKVDWPEEEEEETQKLTDFFMAKRDQAEVDVDDLGTWFGAPAGVECF.

One can recognise an RNase H type-2 domain in the interval 43–270 (PCCLGVDEAG…AKDMLETKGG (228 aa)). Positions 49, 50, and 166 each coordinate a divalent metal cation.

This sequence belongs to the RNase HII family. Eukaryotic subfamily. Requires Mn(2+) as cofactor. It depends on Mg(2+) as a cofactor.

The catalysed reaction is Endonucleolytic cleavage to 5'-phosphomonoester.. In terms of biological role, endonuclease that specifically degrades the RNA of RNA-DNA hybrids. Participates in DNA replication. This chain is Ribonuclease H2 subunit A (rnh-201), found in Neurospora crassa (strain ATCC 24698 / 74-OR23-1A / CBS 708.71 / DSM 1257 / FGSC 987).